The following is a 143-amino-acid chain: Putative mediator of RNA polymerase II transcription subunit 11 (143 aa).

The stretch at 97 to 143 (ILSHLEDLNNIVENNQEKQEKEKQEKEKLEKEKLEKEKQQSNEMNID) forms a coiled coil. Residues 109-143 (ENNQEKQEKEKQEKEKLEKEKLEKEKQQSNEMNID) form a disordered region. The segment covering 111-136 (NQEKQEKEKQEKEKLEKEKLEKEKQQ) has biased composition (basic and acidic residues).

The protein belongs to the Mediator complex subunit 11 family. As to quaternary structure, component of the Mediator complex.

The protein resides in the nucleus. Functionally, component of the Mediator complex, a coactivator involved in the regulated transcription of nearly all RNA polymerase II-dependent genes. Mediator functions as a bridge to convey information from gene-specific regulatory proteins to the basal RNA polymerase II transcription machinery. Mediator is recruited to promoters by direct interactions with regulatory proteins and serves as a scaffold for the assembly of a functional pre-initiation complex with RNA polymerase II and the general transcription factors. This is Putative mediator of RNA polymerase II transcription subunit 11 (med11) from Dictyostelium discoideum (Social amoeba).